The following is a 469-amino-acid chain: Gamma-aminobutyric acid permease (469 aa).

At 1–17 (MNQSQSGLKKELKTRHM) the chain is on the cytoplasmic side. Residues 18-38 (TMISIAGVIGAGLFVGSGSVI) traverse the membrane as a helical segment. Position 39 (H39) is a topological domain, extracellular. Residues 40–60 (STGPGAVVSYALAGLLVIFIM) form a helical membrane-spanning segment. Residues 61-94 (RMLGEMSAVNPTSGSFSQYAHDAIGPWAGFTIGW) are Cytoplasmic-facing. A helical membrane pass occupies residues 95–115 (LYWFFWVIVIAIEAIAGAGII). Position 116 (Q116) is a topological domain, extracellular. The chain crosses the membrane as a helical span at residues 117–137 (YWFHDIPLWLTSLILTIVLTL). Residues 138-157 (TNVYSVKSFGEFEYWFSLIK) are Cytoplasmic-facing. A helical membrane pass occupies residues 158–178 (VVTIIAFLIVGFAFIFGFAPG). Over 179–200 (SEPVGFSNLTGKGGFFPEGISS) the chain is Extracellular. The chain crosses the membrane as a helical span at residues 201–221 (VLLGIVVVIFSFMGTEIVAIA). Topologically, residues 222-242 (AGETSNPIESVTKATRSVVWR) are cytoplasmic. Residues 243-263 (IIVFYVGSIAIVVALLPWNSA) form a helical membrane-spanning segment. The Extracellular portion of the chain corresponds to 264–269 (NILESP). Residues 270 to 290 (FVAVLEHIGVPAAAQIMNFIV) traverse the membrane as a helical segment. Residues 291 to 328 (LTAVLSCLNSGLYTTSRMLYSLAERNEAPRRFMKLSKK) lie on the Cytoplasmic side of the membrane. The chain crosses the membrane as a helical span at residues 329–349 (GVPVQAIVAGTFFSYIAVVMN). Topologically, residues 350–355 (YFSPDT) are extracellular. A helical transmembrane segment spans residues 356–376 (VFLFLVNSSGAIALLVYLVIA). Residues 377-401 (VSQLKMRKKLEKTNPEALKIKMWLF) are Cytoplasmic-facing. Residues 402–422 (PFLTYLTIIAICGILVSMAFI) form a helical membrane-spanning segment. Over 423–425 (DSM) the chain is Extracellular. The helical transmembrane segment at 426–446 (RDELLLTGVITGIVLISYLVF) threads the bilayer. At 447-469 (RKRKVSEKAAANPVTQQQPDILP) the chain is on the cytoplasmic side.

This sequence belongs to the amino acid-polyamine-organocation (APC) superfamily. Amino acid transporter (AAT) (TC 2.A.3.1) family.

The protein localises to the cell membrane. The catalysed reaction is 4-aminobutanoate(in) + H(+)(in) = 4-aminobutanoate(out) + H(+)(out). It catalyses the reaction beta-alanine(in) + H(+)(in) = beta-alanine(out) + H(+)(out). It participates in amino-acid degradation; 4-aminobutanoate degradation. Transporter for gamma-aminobutyrate (GABA). Can also transport beta-alanine. Can translocate several open-chain GABA analogs (3-aminobutyrate, 3-aminopropanoate, cis-4-aminobutenoate) across the membrane via counterflow against GABA, but cannot transport muscimol. Also functions as a low-affinity proline importer. This chain is Gamma-aminobutyric acid permease, found in Bacillus subtilis (strain 168).